A 317-amino-acid chain; its full sequence is tRNA(Ile)-lysidine synthase (317 aa).

Residue 32–37 coordinates ATP; it reads SGGVDS.

It belongs to the tRNA(Ile)-lysidine synthase family.

Its subcellular location is the cytoplasm. The enzyme catalyses cytidine(34) in tRNA(Ile2) + L-lysine + ATP = lysidine(34) in tRNA(Ile2) + AMP + diphosphate + H(+). Its function is as follows. Ligates lysine onto the cytidine present at position 34 of the AUA codon-specific tRNA(Ile) that contains the anticodon CAU, in an ATP-dependent manner. Cytidine is converted to lysidine, thus changing the amino acid specificity of the tRNA from methionine to isoleucine. This is tRNA(Ile)-lysidine synthase from Aquifex aeolicus (strain VF5).